A 356-amino-acid chain; its full sequence is Cyanuric acid amidohydrolase (356 aa).

Residues 1-99 (MPIAKVHRIA…FLVFERAEGN (99 aa)) form an RU A region. Substrate contacts are provided by residues arginine 52 and 79 to 80 (SG). An RU B region spans residues 106-243 (ALAIGRAHTP…HEIVVLGMSE (138 aa)). Residue lysine 156 is part of the active site. Residues arginine 188 and 226–227 (SS) each bind substrate. Catalysis depends on serine 226, which acts as the Nucleophile. Positions 249-356 (LAIAHGVMAD…VAVIAARTMG (108 aa)) are RU C. Residue glutamate 287 participates in Mg(2+) binding. Substrate-binding positions include arginine 314 and 333-334 (SG). Mg(2+) contacts are provided by glycine 336, glutamine 339, glycine 340, proline 341, and glycine 344.

This sequence belongs to the cyclic amide hydrolase (CyAH) family. In terms of assembly, homotetramer.

The enzyme catalyses cyanurate + H2O = 1-carboxybiuret + H(+). The protein operates within xenobiotic degradation; atrazine degradation; biuret from cyanurate: step 1/1. With respect to regulation, inhibited by barbituric acid. In terms of biological role, responsible for the hydrolysis of cyanuric acid, an intermediate formed during catabolism of s-triazine based compounds in herbicides such as atrazine and polymers such as melamine. Catalyzes the hydrolytic opening of the s-triazine ring of cyanuric acid (2,4,6-trihydroxy-s-triazine) to yield carbon dioxide and carboxybiuret, which spontaneously decarboxylates to biuret. This is Cyanuric acid amidohydrolase from Azorhizobium caulinodans (strain ATCC 43989 / DSM 5975 / JCM 20966 / LMG 6465 / NBRC 14845 / NCIMB 13405 / ORS 571).